Consider the following 739-residue polypeptide: Phosphoribosylformylglycinamidine synthase subunit PurL (739 aa).

The active site involves His55. Residues Tyr58 and Lys97 each contribute to the ATP site. Glu99 serves as a coordination point for Mg(2+). Substrate-binding positions include 100–103 (SHNH) and Arg122. The active-site Proton acceptor is His101. Position 123 (Asp123) interacts with Mg(2+). Residue Gln246 coordinates substrate. Asp276 lines the Mg(2+) pocket. Substrate is bound at residue 320 to 322 (ESQ). ATP-binding residues include Asp502 and Gly539. Asn540 is a binding site for Mg(2+). Ser542 is a binding site for substrate.

Belongs to the FGAMS family. As to quaternary structure, monomer. Part of the FGAM synthase complex composed of 1 PurL, 1 PurQ and 2 PurS subunits.

It localises to the cytoplasm. The catalysed reaction is N(2)-formyl-N(1)-(5-phospho-beta-D-ribosyl)glycinamide + L-glutamine + ATP + H2O = 2-formamido-N(1)-(5-O-phospho-beta-D-ribosyl)acetamidine + L-glutamate + ADP + phosphate + H(+). It participates in purine metabolism; IMP biosynthesis via de novo pathway; 5-amino-1-(5-phospho-D-ribosyl)imidazole from N(2)-formyl-N(1)-(5-phospho-D-ribosyl)glycinamide: step 1/2. In terms of biological role, part of the phosphoribosylformylglycinamidine synthase complex involved in the purines biosynthetic pathway. Catalyzes the ATP-dependent conversion of formylglycinamide ribonucleotide (FGAR) and glutamine to yield formylglycinamidine ribonucleotide (FGAM) and glutamate. The FGAM synthase complex is composed of three subunits. PurQ produces an ammonia molecule by converting glutamine to glutamate. PurL transfers the ammonia molecule to FGAR to form FGAM in an ATP-dependent manner. PurS interacts with PurQ and PurL and is thought to assist in the transfer of the ammonia molecule from PurQ to PurL. In Lactiplantibacillus plantarum (strain ATCC BAA-793 / NCIMB 8826 / WCFS1) (Lactobacillus plantarum), this protein is Phosphoribosylformylglycinamidine synthase subunit PurL.